We begin with the raw amino-acid sequence, 307 residues long: 4-hydroxythreonine-4-phosphate dehydrogenase (307 aa).

Residues His121 and Thr122 each contribute to the substrate site. A divalent metal cation is bound by residues His150, His189, and His246. Residues Lys254, Asn263, and Arg272 each coordinate substrate.

It belongs to the PdxA family. As to quaternary structure, homodimer. Zn(2+) serves as cofactor. It depends on Mg(2+) as a cofactor. Co(2+) is required as a cofactor.

It is found in the cytoplasm. It carries out the reaction 4-(phosphooxy)-L-threonine + NAD(+) = 3-amino-2-oxopropyl phosphate + CO2 + NADH. It functions in the pathway cofactor biosynthesis; pyridoxine 5'-phosphate biosynthesis; pyridoxine 5'-phosphate from D-erythrose 4-phosphate: step 4/5. In terms of biological role, catalyzes the NAD(P)-dependent oxidation of 4-(phosphooxy)-L-threonine (HTP) into 2-amino-3-oxo-4-(phosphooxy)butyric acid which spontaneously decarboxylates to form 3-amino-2-oxopropyl phosphate (AHAP). This chain is 4-hydroxythreonine-4-phosphate dehydrogenase, found in Campylobacter fetus subsp. fetus (strain 82-40).